Here is a 130-residue protein sequence, read N- to C-terminus: Ribosome-binding factor A (130 aa).

Belongs to the RbfA family. Monomer. Binds 30S ribosomal subunits, but not 50S ribosomal subunits or 70S ribosomes.

It localises to the cytoplasm. Its function is as follows. One of several proteins that assist in the late maturation steps of the functional core of the 30S ribosomal subunit. Associates with free 30S ribosomal subunits (but not with 30S subunits that are part of 70S ribosomes or polysomes). Required for efficient processing of 16S rRNA. May interact with the 5'-terminal helix region of 16S rRNA. The polypeptide is Ribosome-binding factor A (Pseudomonas aeruginosa (strain LESB58)).